A 1135-amino-acid polypeptide reads, in one-letter code: MGIWKWLVMASLVWPVLTLRNVYDMKIECPHTVSFGENSVIGYVELPPMPLADTAQLVPESSCSMDNHQSLNTITKYTQVSWRGKADQSQSSQTSFETVSTEVDLKGTCVLKHKMVEESYRSRKSITCYDLSCNSTYCKPTLYMIVPIHACNMMKSCLIALGPYRVQVVYERTYCMTGVLIEGKCFVPDQSVVSIIKHGIFDIASVHIVCFFVAVKGNTYKIFEQVKKSFESTCNDTENKVQGYYICIVGGNSAPIYVPTLDDFRSMEAFTGIFRSPHGEDHDLAGEETATYSIVGPANAKVPHSASSDTLSLIAFSGIPSDSSLSILTSSTEAKHVFSPGLFPKLNHTNCDKGAIPLMWTGMIDLPGYYEAIHPCTVFCVLSGPGASCEAFSEGGIFNITYPMCLVSKQNRFRLTEQQVNFVCQRVDVDIVVYCNGQRKVILTKTLVIGQCIYTITSLFSLLPGVAHSIAVELCVPGFHGWATAALLVTFCFGWVLIPAITFIILTILKFIANIFHTSNQENRLKSVLRKIKEEFEKTKGSMVCDVCKYECETYKELKAHGVSCPQSQCPYCFTHCEPTEAAFQAHYKVCQVTHRFRDDLKKTVTPQNFTPGCYRTLNLFRYKSRCYIFTMWIFLLVLESILWAASASETPLTPVWNDNAHGVGSVPMHTDLELDFSLTSSSKYTYRRKLTNPLEEAQSIDLHIEIEEQTIGVDVHALGHWFDGRLNLKTSFHCYGACTKYEYPWHTAKCHYERDYQYETSWGCNPSDCPGVGTGCTACGLYLDRLKPVGSAYKIITIRYSRRVCVQFGEENLCKIIDMNDCFVSRHVKVCIIGTVSKFSQGDTLLFFGPLEGGGLIFKHWCTSTCQFGDPGDIMSPRDKGFLCPEFPGSFRKKCNFATTPICEYDGNMVSGYKKVMATIDSFQSFNTSTMHFTDERIEWKDPDGMLRDHINILVTKDIDFDNLGENPCKIGLQTSSIEGAWGSGVGFTLTCLVSLTECPTFLTSIKACDKAICYGAESVTLTRGQNTVKVSGKGGHSGSTFKCCHGEDCSQIGLHAAAPHLDKVNGISEMENSKEYDDGAPQCGIKCWFVKSGEWISGIFSGNWIVLIVLCVFLLFSLVLLSILCPVRKHKKS.

An N-terminal signal peptide occupies residues 1 to 18; it reads MGIWKWLVMASLVWPVLT. Topologically, residues 19-485 are lumenal; that stretch reads LRNVYDMKIE…VPGFHGWATA (467 aa). Intrachain disulfides connect cysteine 29/cysteine 151, cysteine 63/cysteine 157, cysteine 109/cysteine 128, cysteine 133/cysteine 138, cysteine 175/cysteine 185, cysteine 210/cysteine 247, cysteine 234/cysteine 351, cysteine 376/cysteine 435, cysteine 380/cysteine 389, cysteine 405/cysteine 424, and cysteine 452/cysteine 475. Asparagine 134 carries N-linked (GlcNAc...) asparagine; by host glycosylation. 2 N-linked (GlcNAc...) asparagine; by host glycosylation sites follow: asparagine 235 and asparagine 347. Asparagine 399 carries N-linked (GlcNAc...) asparagine; by host glycosylation. Residues 486 to 506 traverse the membrane as a helical segment; that stretch reads ALLVTFCFGWVLIPAITFIIL. Residues 507–627 are Cytoplasmic-facing; the sequence is TILKFIANIF…LNLFRYKSRC (121 aa). A binding to the ribonucleoprotein region spans residues 516 to 533; that stretch reads FHTSNQENRLKSVLRKIK. 2 consecutive CCHC-type zinc fingers follow at residues 545–565 and 570–591; these read CDVC…GVSC and CPYC…YKVC. Binding to the ribonucleoprotein regions lie at residues 588–605, 592–603, and 611–625; these read YKVC…KKTV, QVTHRFRDDLKK, and TPGC…RYKS. The ITAM domain maps to 611–634; the sequence is TPGCYRTLNLFRYKSRCYIFTMWI. The YxxL motif lies at 615 to 618; the sequence is YRTL. A helical membrane pass occupies residues 628–648; it reads YIFTMWIFLLVLESILWAASA. The Lumenal segment spans residues 649–1105; that stretch reads SETPLTPVWN…EWISGIFSGN (457 aa). Intrachain disulfides connect cysteine 735–cysteine 770, cysteine 739–cysteine 777, cysteine 751–cysteine 885, cysteine 765–cysteine 896, cysteine 780–cysteine 904, cysteine 806–cysteine 815, cysteine 823–cysteine 832, and cysteine 863–cysteine 867. Residues 757–777 form a fusion loop region; it reads YQYETSWGCNPSDCPGVGTGC. N-linked (GlcNAc...) asparagine; by host glycosylation is present at asparagine 928. Cystine bridges form between cysteine 970–cysteine 1000, cysteine 993–cysteine 1045, cysteine 1010–cysteine 1015, cysteine 1046–cysteine 1051, and cysteine 1085–cysteine 1089. A helical transmembrane segment spans residues 1106 to 1126; that stretch reads WIVLIVLCVFLLFSLVLLSIL. Residues 1122–1135 are binding to the ribonucleoprotein; that stretch reads LLSILCPVRKHKKS. At 1127–1135 the chain is on the cytoplasmic side; the sequence is CPVRKHKKS.

The protein belongs to the hantavirus envelope glycoprotein family. Homodimer. Homotetramer; forms heterotetrameric Gn-Gc spikes in the pre-fusion conformation. Interacts (via C-terminus) with the nucleoprotein. Interacts with host TUFM; this interaction contributes to the virus-induced degradation of mitochondria by autophagy, which leads to degradation of host MAVS and inhibition of type I interferon (IFN) responses. Interacts with host MAP1LC3B; this interaction contributes to the virus-induced degradation of mitochondria by autophagy, which leads to degradation of host MAVS and inhibition of type I interferon (IFN) responses. As to quaternary structure, homodimer. Homotetramer; forms heterotetrameric Gn-Gc spikes in the pre-fusion conformation. Homotrimer; forms homotrimer in the post-fusion conformation at acidic pH. Interacts (via C-terminus) with the nucleoprotein. Envelope polyprotein precursor is quickly cleaved in vivo just after synthesis, presumably by host signal peptidase.

Its subcellular location is the virion membrane. The protein resides in the host cell surface. The protein localises to the host Golgi apparatus membrane. It localises to the host endoplasmic reticulum membrane. It is found in the host mitochondrion. Its function is as follows. Forms homotetramers with glycoprotein C at the surface of the virion. Attaches the virion to host cell receptors including integrin ITGAV/ITGB3. This attachment induces virion internalization predominantly through clathrin-dependent endocytosis. May also bind to host C1QBP for virus entry into the host cell. Mediates the assembly and budding of infectious virus particles through its interaction with the nucleocapsid protein and the viral genome. May dysregulate normal immune and endothelial cell responses through an ITAM motif. Translocates to mitochondria, binds to host TUFM and recruits MAP1LC3B. These interactions induce mitochondrial autophagy and therefore destruction of host MAVS leading to inhibition of type I interferon (IFN) responses. Concomitant breakdown of glycoprotein N is apparently prevented by the nucleoprotein that may inhibit Gn-stimulated autophagosome-lysosome fusion. Interacts with the viral genomic RNA. Forms homotetramers with glycoprotein N at the surface of the virion. Attaches the virion to host cell receptors including integrin ITGAV/ITGB3. This attachment induces virion internalization predominantly through clathrin-dependent endocytosis. May also bind to host C1QBP for virus entry into the host cell. Class II fusion protein that promotes fusion of viral membrane with host endosomal membrane after endocytosis of the virion. This Hantaan virus (strain Lee) (Lee virus) protein is Envelopment polyprotein (GP).